The following is a 468-amino-acid chain: Glutamate--tRNA ligase (468 aa).

Residues 11–21 carry the 'HIGH' region motif; it reads PSPTGFIHLGN. The 'KMSKS' region motif lies at 243-247; that stretch reads KMSKR. An ATP-binding site is contributed by lysine 246.

This sequence belongs to the class-I aminoacyl-tRNA synthetase family. Glutamate--tRNA ligase type 1 subfamily. In terms of assembly, monomer.

It localises to the cytoplasm. The enzyme catalyses tRNA(Glu) + L-glutamate + ATP = L-glutamyl-tRNA(Glu) + AMP + diphosphate. Its function is as follows. Catalyzes the attachment of glutamate to tRNA(Glu) in a two-step reaction: glutamate is first activated by ATP to form Glu-AMP and then transferred to the acceptor end of tRNA(Glu). This chain is Glutamate--tRNA ligase, found in Delftia acidovorans (strain DSM 14801 / SPH-1).